A 92-amino-acid chain; its full sequence is Beta-2-microglobulin (92 aa).

The region spanning Pro2–Thr89 is the Ig-like C1-type domain. A disulfide bridge links Cys22 with Cys77.

This sequence belongs to the beta-2-microglobulin family. In terms of assembly, heterodimer of an alpha chain and a beta chain. Beta-2-microglobulin is the beta-chain of major histocompatibility complex class I molecules.

The protein resides in the secreted. Its function is as follows. Component of the class I major histocompatibility complex (MHC). Involved in the presentation of peptide antigens to the immune system. In Mus spretus (Western Mediterranean mouse), this protein is Beta-2-microglobulin (B2m).